Here is a 406-residue protein sequence, read N- to C-terminus: Probable endo-xylogalacturonan hydrolase A (406 aa).

The N-terminal stretch at 1–18 (MLYYRNLALLSLLSLSSA) is a signal peptide. PbH1 repeat units lie at residues 183–213 (AKDV…DIGS), 214–235 (STHV…ALKP), 237–257 (CNYV…SVGS), and 299–320 (VKNV…QIQS). The active-site Proton donor is aspartate 228. The N-linked (GlcNAc...) asparagine glycan is linked to asparagine 244. Histidine 251 is a catalytic residue. Asparagine 301 carries an N-linked (GlcNAc...) asparagine glycan.

This sequence belongs to the glycosyl hydrolase 28 family.

It is found in the secreted. Its function is as follows. Pectinolytic enzyme involved in the degradation of xylogalacturonan (xga), a galacturonan backbone heavily substituted with xylose, and which is one important component of the hairy regions of pectin. Activity requires a galacturonic acid backbone substituted with xylose. In Neosartorya fischeri (strain ATCC 1020 / DSM 3700 / CBS 544.65 / FGSC A1164 / JCM 1740 / NRRL 181 / WB 181) (Aspergillus fischerianus), this protein is Probable endo-xylogalacturonan hydrolase A (xghA).